The chain runs to 104 residues: Protein SMALL AUXIN UP-REGULATED RNA 9 (104 aa).

It belongs to the ARG7 family. Interacts with and inhibits PP2C-D subfamily of type 2C phosphatases such as PP2C67/PP2C-D1. In terms of tissue distribution, expressed in etiolated hypocotyls, petioles, leaves and flowers.

The protein localises to the cell membrane. Functionally, provide a mechanistic link between auxin and plasma membrane H(+)-ATPases (PM H(+)-ATPases, e.g. AHA1 and AHA2), and triggers PM H(+)-ATPases activity by promoting phosphorylation of their C-terminal autoinhibitory domain as a result of PP2C-D subfamily of type 2C phosphatases inhibition, thus leading to the acidification of the apoplast and the facilitation of solutes and water uptake to drive cell expansion. Triggers plant growth probably by promoting cell elongation. Regulates branch angles and bending. Probably involved in light intensity mediated root development. The protein is Protein SMALL AUXIN UP-REGULATED RNA 9 of Arabidopsis thaliana (Mouse-ear cress).